The primary structure comprises 190 residues: Vascular endothelial growth factor A (190 aa).

The first 26 residues, 1–26 (MNFLLSWVHWSLALLLYLHHAKWSQA), serve as a signal peptide directing secretion. Disulfide bonds link cysteine 51–cysteine 93, cysteine 82–cysteine 127, and cysteine 86–cysteine 129. A glycan (N-linked (GlcNAc...) asparagine) is linked at asparagine 100.

Belongs to the PDGF/VEGF growth factor family. As to quaternary structure, homodimer; disulfide-linked. Also found as heterodimer with PGF. Interacts with NRP1. Interacts with isoform 2 of BSG. Interacts with CD82; this interaction inhibits VEGFA-mediated signaling pathway.

Its subcellular location is the secreted. Functionally, growth factor active in angiogenesis, vasculogenesis and endothelial cell growth. Induces endothelial cell proliferation, promotes cell migration, inhibits apoptosis and induces permeabilization of blood vessels. Binds to the FLT1/VEGFR1 and KDR/VEGFR2 receptors, heparan sulfate and heparin. Binding to NRP1 receptor initiates a signaling pathway needed for motor neuron axon guidance and cell body migration, including for the caudal migration of facial motor neurons from rhombomere 4 to rhombomere 6 during embryonic development. Also binds the DEAR/FBXW7-AS1 receptor. The chain is Vascular endothelial growth factor A (VEGFA) from Equus caballus (Horse).